The chain runs to 310 residues: Glutaminase (310 aa).

S66, N117, E161, N168, Y192, Y244, and V262 together coordinate substrate. K294 carries the post-translational modification N6-acetyllysine.

It belongs to the glutaminase family. In terms of assembly, homotetramer.

The catalysed reaction is L-glutamine + H2O = L-glutamate + NH4(+). This Escherichia coli O81 (strain ED1a) protein is Glutaminase.